Reading from the N-terminus, the 282-residue chain is Probable ribosomal RNA small subunit methyltransferase A (282 aa).

The S-adenosyl-L-methionine site is built by H24, L26, G51, E72, D100, and N115.

Belongs to the class I-like SAM-binding methyltransferase superfamily. rRNA adenine N(6)-methyltransferase family. RsmA subfamily.

It localises to the cytoplasm. In terms of biological role, specifically dimethylates two adjacent adenosines in the loop of a conserved hairpin near the 3'-end of 16S rRNA in the 30S particle. May play a critical role in biogenesis of 30S subunits. The protein is Probable ribosomal RNA small subunit methyltransferase A of Halobacterium salinarum (strain ATCC 29341 / DSM 671 / R1).